The primary structure comprises 207 residues: N-(5'-phosphoribosyl)anthranilate isomerase (207 aa).

Belongs to the TrpF family.

It catalyses the reaction N-(5-phospho-beta-D-ribosyl)anthranilate = 1-(2-carboxyphenylamino)-1-deoxy-D-ribulose 5-phosphate. It functions in the pathway amino-acid biosynthesis; L-tryptophan biosynthesis; L-tryptophan from chorismate: step 3/5. This chain is N-(5'-phosphoribosyl)anthranilate isomerase, found in Legionella pneumophila (strain Corby).